Consider the following 163-residue polypeptide: N5-carboxyaminoimidazole ribonucleotide mutase (163 aa).

Ser11, Asp14, and Arg41 together coordinate substrate.

The protein belongs to the AIR carboxylase family. Class I subfamily.

The catalysed reaction is 5-carboxyamino-1-(5-phospho-D-ribosyl)imidazole + H(+) = 5-amino-1-(5-phospho-D-ribosyl)imidazole-4-carboxylate. Its pathway is purine metabolism; IMP biosynthesis via de novo pathway; 5-amino-1-(5-phospho-D-ribosyl)imidazole-4-carboxylate from 5-amino-1-(5-phospho-D-ribosyl)imidazole (N5-CAIR route): step 2/2. Its function is as follows. Catalyzes the conversion of N5-carboxyaminoimidazole ribonucleotide (N5-CAIR) to 4-carboxy-5-aminoimidazole ribonucleotide (CAIR). This Pseudomonas aeruginosa (strain ATCC 15692 / DSM 22644 / CIP 104116 / JCM 14847 / LMG 12228 / 1C / PRS 101 / PAO1) protein is N5-carboxyaminoimidazole ribonucleotide mutase.